A 224-amino-acid chain; its full sequence is Paired immunoglobulin-like type 2 receptor beta (224 aa).

Residues 1–28 form the signal peptide; sequence MALLISLPGGTPAMAQVLLLLSSGCLHA. Residues 29–195 lie on the Extracellular side of the membrane; that stretch reads GNSERYNRKN…NPSLMNLGAM (167 aa). N-linked (GlcNAc...) asparagine glycosylation is found at Asn90, Asn107, and Asn154. Residues 196 to 216 form a helical membrane-spanning segment; sequence VTMLLAKVLVIVLVYGWMIFL. At 217 to 224 the chain is on the cytoplasmic side; the sequence is RWKQRPAH.

In terms of assembly, interacts with CD99. Probably associates with DAP12. As to expression, widely expressed with highest levels in spleen, liver and lung. Predominantly expressed by natural killer cells, macrophages, and granulocytes and dendritic cells (BM-DC).

It localises to the membrane. Functionally, paired receptors consist of highly related activating and inhibitory receptors and are widely involved in the regulation of the immune system. PILRB is thought to act as a cellular signaling activating receptor that associates with ITAM-bearing adapter molecules on the cell surface. Seems to associate with DAP12 and is a receptor for CD99. May be involved in target cell recognition by natural killer cells and in activation of dendritic cells. The polypeptide is Paired immunoglobulin-like type 2 receptor beta (Pilrb) (Mus musculus (Mouse)).